A 917-amino-acid polypeptide reads, in one-letter code: DNA topoisomerase 1 beta (917 aa).

Positions 1–368 (MATEAFVKPV…SLPSGDGQKK (368 aa)) are disordered. A compositionally biased stretch (polar residues) spans 32 to 63 (RNSNTAATTNRPSPINNAMRNSAIGSTKSSPP). Low complexity predominate over residues 66 to 82 (SPLTSPNRSASSSTRSS). The segment covering 89 to 100 (PSSSSVQRSTLK) has biased composition (polar residues). Basic and acidic residues-rich tracts occupy residues 102-116 (PLRD…ERNG) and 134-149 (DKPL…KEVT). Over residues 150–170 (KQPSSSGRGSTQQAVQKSNMR) the composition is skewed to polar residues. The segment covering 177-187 (YTKKKVLDERA) has biased composition (basic and acidic residues). Residues 189-205 (MSSTVQTKTSVGTSSSK) show a composition bias toward polar residues. 2 stretches are compositionally biased toward basic and acidic residues: residues 256–265 (KLSEPARPVK) and 296–307 (VKEDNSDGDDHV). Position 301 is a phosphoserine (Ser-301). Low complexity predominate over residues 316–338 (DSSNNKSSSAKPSSSKMIASSSR). Interaction with DNA stretches follow at residues 575 to 576 (KY), 638 to 643 (RAGNEK), and 729 to 731 (TAK). The 331-residue stretch at 582–912 (SSSLKGQSDK…MDVDPEFRFC (331 aa)) folds into the Topo IB-type catalytic domain. Positions 779 to 858 (VSKSHGAQVE…ERDMQTKEDM (80 aa)) form a coiled coil. Residue Tyr-870 is the O-(3'-phospho-DNA)-tyrosine intermediate of the active site.

Belongs to the type IB topoisomerase family.

The protein resides in the nucleus. It catalyses the reaction ATP-independent breakage of single-stranded DNA, followed by passage and rejoining.. In terms of biological role, releases the supercoiling and torsional tension of DNA introduced during the DNA replication and transcription by transiently cleaving and rejoining one strand of the DNA duplex. Introduces a single-strand break via transesterification at a target site in duplex DNA. The scissile phosphodiester is attacked by the catalytic tyrosine of the enzyme, resulting in the formation of a DNA-(3'-phosphotyrosyl)-enzyme intermediate and the expulsion of a 5'-OH DNA strand. The free DNA strand then rotates around the intact phosphodiester bond on the opposing strand, thus removing DNA supercoils. Finally, in the religation step, the DNA 5'-OH attacks the covalent intermediate to expel the active-site tyrosine and restore the DNA phosphodiester backbone. Topoisomerases 1 enzymes (TOP1A and TOP1B) are essential for plant survival. The protein is DNA topoisomerase 1 beta of Arabidopsis thaliana (Mouse-ear cress).